The following is a 256-amino-acid chain: tRNA (guanine-N(7)-)-methyltransferase (256 aa).

The disordered stretch occupies residues 17–45; it reads TCETVPGLPQKKHYRQRAHSNPHSDHDIE. The segment covering 26–36 has biased composition (basic residues); sequence QKKHYRQRAHS. Residues glycine 74, 97-98, 132-133, and leucine 152 contribute to the S-adenosyl-L-methionine site; these read EI and NA. Residue aspartate 155 is part of the active site. Residue 230–232 coordinates S-adenosyl-L-methionine; that stretch reads TEE.

This sequence belongs to the class I-like SAM-binding methyltransferase superfamily. TrmB family.

It localises to the nucleus. It carries out the reaction guanosine(46) in tRNA + S-adenosyl-L-methionine = N(7)-methylguanosine(46) in tRNA + S-adenosyl-L-homocysteine. The protein operates within tRNA modification; N(7)-methylguanine-tRNA biosynthesis. Its function is as follows. Catalyzes the formation of N(7)-methylguanine at position 46 (m7G46) in tRNA. The protein is tRNA (guanine-N(7)-)-methyltransferase of Caenorhabditis elegans.